The sequence spans 1169 residues: Pesticidal crystal protein Cry1Gb (1169 aa).

It belongs to the delta endotoxin family.

Promotes colloidosmotic lysis by binding to the midgut epithelial cells of lepidopteran larvae. Toxic to Pieris rapae. In Bacillus thuringiensis subsp. wuhanensis, this protein is Pesticidal crystal protein Cry1Gb (cry1Gb).